The sequence spans 639 residues: UvrABC system protein C (639 aa).

Residues 1 to 16 show a composition bias toward acidic residues; that stretch reads MTDLPVDEPDRDDGAD. Residues 1 to 28 form a disordered region; that stretch reads MTDLPVDEPDRDDGADQPDAGADPATPR. Residues 17 to 27 show a composition bias toward low complexity; that stretch reads QPDAGADPATP. The region spanning 42–120 is the GIY-YIG domain; it reads SSPGVYRMID…IKKLKPRYNI (79 aa). Residues 230 to 265 enclose the UVR domain; the sequence is KALQHDLAKRMDEAAQALDYEQAAIFRDRIKALTNV.

It belongs to the UvrC family. As to quaternary structure, interacts with UvrB in an incision complex.

The protein resides in the cytoplasm. Its function is as follows. The UvrABC repair system catalyzes the recognition and processing of DNA lesions. UvrC both incises the 5' and 3' sides of the lesion. The N-terminal half is responsible for the 3' incision and the C-terminal half is responsible for the 5' incision. This Rhodospirillum rubrum (strain ATCC 11170 / ATH 1.1.1 / DSM 467 / LMG 4362 / NCIMB 8255 / S1) protein is UvrABC system protein C.